The chain runs to 400 residues: Double C2-like domain-containing protein alpha (400 aa).

Residues 1 to 89 form an interaction with UNC13D and DYNLT1 region; sequence MRGRRGDRMT…DSYDSDDATA (89 aa). C2 domains lie at 89–211 and 251–384; these read ALGT…HFNI and ERGR…ERWH. The Ca(2+) site is built by aspartate 120, aspartate 126, aspartate 181, aspartate 183, aspartate 282, aspartate 288, aspartate 342, aspartate 344, and aspartate 350. The tract at residues 215–400 is interaction with UNC13D; that stretch reads RQVPLASPSS…PPAAGALSSA (186 aa).

As to quaternary structure, interacts (via N-terminus) with UNC13A. Interacts with cytoplasmic dynein light chain DYNLT1. Interacts with UNC13D. Ca(2+) is required as a cofactor. Predominantly expressed in brain. Also expressed in testis.

The protein resides in the lysosome. The protein localises to the cytoplasmic vesicle. Its subcellular location is the secretory vesicle. It is found in the synaptic vesicle membrane. It localises to the synapse. The protein resides in the synaptosome. Its function is as follows. Calcium sensor which most probably regulates fusion of vesicles with membranes. Binds calcium and phospholipids. May be involved in calcium dependent neurotransmitter release through the interaction with UNC13A. May be involved in calcium-dependent spontaneous release of neurotransmitter in absence of action potentials in neuronal cells. Regulates Ca(2+)-dependent secretory lysosome exocytosis in mast cells. This Homo sapiens (Human) protein is Double C2-like domain-containing protein alpha (DOC2A).